The primary structure comprises 304 residues: C-type lectin domain family 10 member A (304 aa).

Residues 1 to 35 lie on the Cytoplasmic side of the membrane; it reads MIYENLQNSRIEEKTQEPGKAPSQSFLWRILSWTH. The chain crosses the membrane as a helical; Signal-anchor for type II membrane protein span at residues 36–56; it reads LLLFSLGLSLLLLVVVSVIGS. The Extracellular segment spans residues 57-304; sequence QNSQLRRDLG…ICEMKLAKES (248 aa). Residues Asn-74 and Asn-166 are each glycosylated (N-linked (GlcNAc...) asparagine). One can recognise a C-type lectin domain in the interval 172–298; sequence CCPLHWTEHE…QRTFRWICEM (127 aa). Cystine bridges form between Cys-173–Cys-184, Cys-201–Cys-296, and Cys-274–Cys-288.

Homooligomer. Interacts with SIGLEC1, which may act as a counter-receptor for CLEC10A in lymph node. Detected in lymph node in the subcapsular sinus, interfollicular regions, T and B-cell boundary and in the areas surrounding high endothelial venules (at protein level). Expressed on the surface of activated macrophages. Expressed in heart, lung, testis, skeletal muscle, spleen, brain, kidney and thymus. Expressed in P388, RAW 264.7 and M1 cell lines.

It is found in the membrane. Functionally, recognizes terminal galactose and N-acetylgalactosamine units. May participate in the interaction between tumoricidal macrophages and tumor cells. Plays a role in the recruitment of inflammatory monocytes to adipose tissue in diet-induced obesity. In Mus musculus (Mouse), this protein is C-type lectin domain family 10 member A (Clec10a).